The sequence spans 339 residues: Lipoyl synthase (339 aa).

The interval 13–35 is disordered; the sequence is RPKLDAPARPRHPEKAHRPDTAI. 7 residues coordinate [4Fe-4S] cluster: Cys68, Cys73, Cys79, Cys94, Cys98, Cys101, and Ser307. The 217-residue stretch at 80–296 folds into the Radical SAM core domain; sequence WEKRHATFMI…ETTAYAKGFL (217 aa).

It belongs to the radical SAM superfamily. Lipoyl synthase family. [4Fe-4S] cluster is required as a cofactor.

It is found in the cytoplasm. It carries out the reaction [[Fe-S] cluster scaffold protein carrying a second [4Fe-4S](2+) cluster] + N(6)-octanoyl-L-lysyl-[protein] + 2 oxidized [2Fe-2S]-[ferredoxin] + 2 S-adenosyl-L-methionine + 4 H(+) = [[Fe-S] cluster scaffold protein] + N(6)-[(R)-dihydrolipoyl]-L-lysyl-[protein] + 4 Fe(3+) + 2 hydrogen sulfide + 2 5'-deoxyadenosine + 2 L-methionine + 2 reduced [2Fe-2S]-[ferredoxin]. It functions in the pathway protein modification; protein lipoylation via endogenous pathway; protein N(6)-(lipoyl)lysine from octanoyl-[acyl-carrier-protein]: step 2/2. Functionally, catalyzes the radical-mediated insertion of two sulfur atoms into the C-6 and C-8 positions of the octanoyl moiety bound to the lipoyl domains of lipoate-dependent enzymes, thereby converting the octanoylated domains into lipoylated derivatives. In Methylorubrum extorquens (strain CM4 / NCIMB 13688) (Methylobacterium extorquens), this protein is Lipoyl synthase.